The chain runs to 272 residues: 4-hydroxy-tetrahydrodipicolinate reductase (272 aa).

Residues 11-16 and Glu37 contribute to the NAD(+) site; that span reads GVSGRM. Arg38 is an NADP(+) binding site. Residues 101 to 103 and 125 to 128 each bind NAD(+); these read GTT and AGNM. His158 serves as the catalytic Proton donor/acceptor. His159 provides a ligand contact to (S)-2,3,4,5-tetrahydrodipicolinate. The active-site Proton donor is the Lys162. (S)-2,3,4,5-tetrahydrodipicolinate is bound at residue 168–169; the sequence is GT.

Belongs to the DapB family.

It is found in the cytoplasm. The catalysed reaction is (S)-2,3,4,5-tetrahydrodipicolinate + NAD(+) + H2O = (2S,4S)-4-hydroxy-2,3,4,5-tetrahydrodipicolinate + NADH + H(+). It catalyses the reaction (S)-2,3,4,5-tetrahydrodipicolinate + NADP(+) + H2O = (2S,4S)-4-hydroxy-2,3,4,5-tetrahydrodipicolinate + NADPH + H(+). It participates in amino-acid biosynthesis; L-lysine biosynthesis via DAP pathway; (S)-tetrahydrodipicolinate from L-aspartate: step 4/4. In terms of biological role, catalyzes the conversion of 4-hydroxy-tetrahydrodipicolinate (HTPA) to tetrahydrodipicolinate. The chain is 4-hydroxy-tetrahydrodipicolinate reductase from Roseobacter denitrificans (strain ATCC 33942 / OCh 114) (Erythrobacter sp. (strain OCh 114)).